Reading from the N-terminus, the 494-residue chain is UDP-N-acetylmuramoyl-L-alanyl-D-glutamate--2,6-diaminopimelate ligase (494 aa).

A UDP-N-acetyl-alpha-D-muramoyl-L-alanyl-D-glutamate-binding site is contributed by S32. 112–118 serves as a coordination point for ATP; it reads GTNGKTT. UDP-N-acetyl-alpha-D-muramoyl-L-alanyl-D-glutamate contacts are provided by residues N153, 154-155, S181, and R189; that span reads TT. The residue at position 221 (K221) is an N6-carboxylysine. Meso-2,6-diaminopimelate-binding positions include R383, 407–410, G459, and E463; that span reads DNPR. The Meso-diaminopimelate recognition motif motif lies at 407–410; the sequence is DNPR.

Belongs to the MurCDEF family. MurE subfamily. Mg(2+) is required as a cofactor. In terms of processing, carboxylation is probably crucial for Mg(2+) binding and, consequently, for the gamma-phosphate positioning of ATP.

The protein localises to the cytoplasm. It catalyses the reaction UDP-N-acetyl-alpha-D-muramoyl-L-alanyl-D-glutamate + meso-2,6-diaminopimelate + ATP = UDP-N-acetyl-alpha-D-muramoyl-L-alanyl-gamma-D-glutamyl-meso-2,6-diaminopimelate + ADP + phosphate + H(+). It participates in cell wall biogenesis; peptidoglycan biosynthesis. Catalyzes the addition of meso-diaminopimelic acid to the nucleotide precursor UDP-N-acetylmuramoyl-L-alanyl-D-glutamate (UMAG) in the biosynthesis of bacterial cell-wall peptidoglycan. This is UDP-N-acetylmuramoyl-L-alanyl-D-glutamate--2,6-diaminopimelate ligase from Solibacter usitatus (strain Ellin6076).